The chain runs to 80 residues: MEVIVVIVVIVVVIAIVIVIDSNSNSNSNNSSDSSNESNNSDSSKNGGSDIYQFSSSNKPFLHNFSNNNPNYNINAYFRI.

Residues 1–15 (MEVIVVIVVIVVVIA) form the signal peptide. A compositionally biased stretch (low complexity) spans 23–44 (NSNSNSNNSSDSSNESNNSDSS). Residues 23-52 (NSNSNSNNSSDSSNESNNSDSSKNGGSDIY) are disordered. N-linked (GlcNAc...) asparagine glycosylation is found at asparagine 29, asparagine 30, asparagine 36, asparagine 39, and asparagine 64.

The protein localises to the secreted. This is an uncharacterized protein from Dictyostelium discoideum (Social amoeba).